The following is a 250-amino-acid chain: 3-deoxy-manno-octulosonate cytidylyltransferase (250 aa).

Belongs to the KdsB family.

It is found in the cytoplasm. It carries out the reaction 3-deoxy-alpha-D-manno-oct-2-ulosonate + CTP = CMP-3-deoxy-beta-D-manno-octulosonate + diphosphate. Its pathway is nucleotide-sugar biosynthesis; CMP-3-deoxy-D-manno-octulosonate biosynthesis; CMP-3-deoxy-D-manno-octulosonate from 3-deoxy-D-manno-octulosonate and CTP: step 1/1. It functions in the pathway bacterial outer membrane biogenesis; lipopolysaccharide biosynthesis. Activates KDO (a required 8-carbon sugar) for incorporation into bacterial lipopolysaccharide in Gram-negative bacteria. This chain is 3-deoxy-manno-octulosonate cytidylyltransferase, found in Pectobacterium atrosepticum (strain SCRI 1043 / ATCC BAA-672) (Erwinia carotovora subsp. atroseptica).